A 163-amino-acid chain; its full sequence is MARLFVAVALFGVVAFAAAEKEWTGKTWLGSWASTDRAENWEAFVDALGLPSDQYPREVQRTIHTIYKQGDKYHHEVSIPSKNFKKAIEYTLGTETDVQHGPHTIKLKYTEDGEKLVADVQIPSKNKQIHDIYEVQGDTLTKTYKVGDVVAKRWFTREANPTA.

An N-terminal signal peptide occupies residues 1–19 (MARLFVAVALFGVVAFAAA). An SAHS-c1 region spans residues 22–51 (EWTGKTWLGSWASTDRAENWEAFVDALGLP). An SAHS-c2 region spans residues 67–95 (YKQGDKYHHEVSIPSKNFKKAIEYTLGTE). An SAHS-c3 region spans residues 108–157 (KYTEDGEKLVADVQIPSKNKQIHDIYEVQGDTLTKTYKVGDVVAKRWFTR).

The protein belongs to the Secretory-abundant heat soluble protein (SAHS) family.

It localises to the secreted. Secreted heat soluble protein acting as a molecular shield in water-deficient condition. Tardigrade-specific intrinsically disordered proteins (TDPs) are essential for desiccation tolerance by forming non-crystalline amorphous solids upon desiccation, and this vitrified state mirrors their protective capabilities. In Hypsibius exemplaris (Freshwater tardigrade), this protein is Secretory-abundant heat soluble protein 53582.